Here is an 851-residue protein sequence, read N- to C-terminus: DNA mismatch repair protein MutS (851 aa).

602 to 609 contributes to the ATP binding site; that stretch reads GPNMSGKS.

Belongs to the DNA mismatch repair MutS family.

Its function is as follows. This protein is involved in the repair of mismatches in DNA. It is possible that it carries out the mismatch recognition step. This protein has a weak ATPase activity. This is DNA mismatch repair protein MutS from Streptococcus pyogenes serotype M49 (strain NZ131).